We begin with the raw amino-acid sequence, 134 residues long: Small ribosomal subunit protein uS11 (134 aa).

The protein belongs to the universal ribosomal protein uS11 family. In terms of assembly, part of the 30S ribosomal subunit. Interacts with proteins S7 and S18. Binds to IF-3.

Its function is as follows. Located on the platform of the 30S subunit, it bridges several disparate RNA helices of the 16S rRNA. Forms part of the Shine-Dalgarno cleft in the 70S ribosome. The polypeptide is Small ribosomal subunit protein uS11 (Parafrankia sp. (strain EAN1pec)).